Here is a 64-residue protein sequence, read N- to C-terminus: Ferredoxin-2 (64 aa).

The region spanning 2–29 is the 4Fe-4S ferredoxin-type domain; the sequence is RIHVDQDKCCGAGSCVLAAPDVFDQREE. [3Fe-4S] cluster is bound by residues C10, C16, and C55.

[3Fe-4S] cluster serves as cofactor.

Electron transport protein for the cytochrome P-450-SU2 system. This Streptomyces griseolus protein is Ferredoxin-2 (subB).